Consider the following 80-residue polypeptide: uncharacterized protein (80 aa).

Residues 10 to 29 (FVAREYPLVVVPFIYFVLFL) form a helical membrane-spanning segment.

Its subcellular location is the membrane. This is an uncharacterized protein from Saccharomyces cerevisiae (strain ATCC 204508 / S288c) (Baker's yeast).